The primary structure comprises 363 residues: Alanine racemase (363 aa).

Lys39 (proton acceptor; specific for D-alanine) is an active-site residue. Lys39 is subject to N6-(pyridoxal phosphate)lysine. Arg134 is a substrate binding site. Tyr251 functions as the Proton acceptor; specific for L-alanine in the catalytic mechanism. Met299 is a substrate binding site.

This sequence belongs to the alanine racemase family. Requires pyridoxal 5'-phosphate as cofactor.

The catalysed reaction is L-alanine = D-alanine. It participates in amino-acid biosynthesis; D-alanine biosynthesis; D-alanine from L-alanine: step 1/1. Its function is as follows. Catalyzes the interconversion of L-alanine and D-alanine. May also act on other amino acids. This Thermodesulfovibrio yellowstonii (strain ATCC 51303 / DSM 11347 / YP87) protein is Alanine racemase (alr).